Reading from the N-terminus, the 188-residue chain is dCTP deaminase (188 aa).

A dCTP-binding site is contributed by Lys-109–Arg-114. The Proton donor/acceptor role is filled by Glu-135. DCTP contacts are provided by Gln-154, Tyr-168, and Gln-178.

It belongs to the dCTP deaminase family. As to quaternary structure, homotrimer.

It catalyses the reaction dCTP + H2O + H(+) = dUTP + NH4(+). Its pathway is pyrimidine metabolism; dUMP biosynthesis; dUMP from dCTP (dUTP route): step 1/2. In terms of biological role, catalyzes the deamination of dCTP to dUTP. The protein is dCTP deaminase of Helicobacter acinonychis (strain Sheeba).